The chain runs to 181 residues: TATA-box-binding protein C (181 aa).

2 consecutive repeat copies span residues 5–83 and 99–177.

This sequence belongs to the TBP family.

General factor that plays a role in the activation of archaeal genes transcribed by RNA polymerase. Binds specifically to the TATA box promoter element which lies close to the position of transcription initiation. This Halobacterium salinarum (strain ATCC 700922 / JCM 11081 / NRC-1) (Halobacterium halobium) protein is TATA-box-binding protein C (tbpC1).